A 264-amino-acid chain; its full sequence is GTP cyclohydrolase FolE2 (264 aa).

Belongs to the GTP cyclohydrolase IV family.

The enzyme catalyses GTP + H2O = 7,8-dihydroneopterin 3'-triphosphate + formate + H(+). Its pathway is cofactor biosynthesis; 7,8-dihydroneopterin triphosphate biosynthesis; 7,8-dihydroneopterin triphosphate from GTP: step 1/1. Functionally, converts GTP to 7,8-dihydroneopterin triphosphate. The sequence is that of GTP cyclohydrolase FolE2 from Vesicomyosocius okutanii subsp. Calyptogena okutanii (strain HA).